A 206-amino-acid polypeptide reads, in one-letter code: tRNA(Phe) 7-((3-amino-3-carboxypropyl)-4-demethylwyosine(37)-N(4))-methyltransferase 2 (206 aa).

This sequence belongs to the TYW3 family.

The enzyme catalyses 4-demethyl-7-[(3S)-3-amino-3-carboxypropyl]wyosine(37) in tRNA(Phe) + S-adenosyl-L-methionine = 7-[(3S)-3-amino-3-carboxypropyl]wyosine(37) in tRNA(Phe) + S-adenosyl-L-homocysteine + H(+). Its function is as follows. S-adenosyl-L-methionine-dependent methyltransferase that acts as a component of the wyosine derivatives biosynthesis pathway. Probably methylates N-4 position of wybutosine-86 to produce wybutosine-72. The protein is tRNA(Phe) 7-((3-amino-3-carboxypropyl)-4-demethylwyosine(37)-N(4))-methyltransferase 2 of Pyrococcus horikoshii (strain ATCC 700860 / DSM 12428 / JCM 9974 / NBRC 100139 / OT-3).